A 336-amino-acid polypeptide reads, in one-letter code: 2-phospho-L-lactate transferase (336 aa).

Aspartate 49 provides a ligand contact to 7,8-didemethyl-8-hydroxy-5-deazariboflavin.

Belongs to the CofD family. As to quaternary structure, homodimer. The cofactor is Mg(2+).

It catalyses the reaction (2S)-lactyl-2-diphospho-5'-guanosine + 7,8-didemethyl-8-hydroxy-5-deazariboflavin = oxidized coenzyme F420-0 + GMP + H(+). It participates in cofactor biosynthesis; coenzyme F420 biosynthesis. Functionally, catalyzes the transfer of the 2-phospholactate moiety from (2S)-lactyl-2-diphospho-5'-guanosine to 7,8-didemethyl-8-hydroxy-5-deazariboflavin (FO) with the formation of oxidized coenzyme F420-0 and GMP. This Halobacterium salinarum (strain ATCC 700922 / JCM 11081 / NRC-1) (Halobacterium halobium) protein is 2-phospho-L-lactate transferase.